The chain runs to 389 residues: Probable nitrate transporter NarT (389 aa).

12 consecutive transmembrane segments (helical) span residues 14 to 34, 45 to 65, 69 to 89, 97 to 117, 139 to 159, 161 to 181, 211 to 231, 246 to 266, 268 to 288, 294 to 314, 331 to 351, and 353 to 373; these read TLSLVVGFMAWSIIAPLMPFI, ISIILAIPVILGSVLRVPFGY, IVGAKWVFFTSFIVLLFPIFF, GMLMASGFFLGVGGAIFSVGV, GNIGTAVSSFLAPPIAGIIGW, TTVRSYLIIIALFALIMFIFG, WYFITFGAFVAFGIFLPNYLV, GVFIALATFLRPIGGILGDKF, AVKVLMIDFVVMIIGAIILGI, LFTVGCLTISICAGIGNGLIF, IVSMMGGLGGFFPPLVITYVA, and LTGSSHLAFIFLAVFGCIALF.

It belongs to the major facilitator superfamily. Nitrate/nitrite porter (TC 2.A.1.8) family.

It localises to the cell membrane. Its function is as follows. Probably required for nitrate uptake under anoxic conditions. Also possibly involved in excretion of nitrite produced by the dissimilatory reduction of nitrate. In Staphylococcus aureus (strain USA300), this protein is Probable nitrate transporter NarT (narT).